We begin with the raw amino-acid sequence, 735 residues long: Transcription factor RFX4 (735 aa).

A disordered region spans residues 25 to 59; that stretch reads SESKRFSSHSSIGNISNDENEEKENNRASKPHSTP. The DNA-binding element occupies 44–126; the sequence is NEEKENNRAS…RRLGTRGQSK (83 aa). A DNA-binding region (RFX-type winged-helix) is located at residues 61 to 136; that stretch reads TLQWLEENYE…YHYYGIAVKE (76 aa). Positions 315 to 487 are necessary for dimerization; it reads RFSQILKRQT…NELMRAMKGE (173 aa).

Belongs to the RFX family.

It is found in the nucleus. In terms of biological role, may activate transcription by interacting directly with the X-box. In Danio rerio (Zebrafish), this protein is Transcription factor RFX4 (rfx4).